A 674-amino-acid chain; its full sequence is UvrABC system protein B (674 aa).

The 389-residue stretch at 26-414 folds into the Helicase ATP-binding domain; sequence EGLDSGLAHQ…SGNDIAEQVV (389 aa). 39-46 serves as a coordination point for ATP; sequence GVTGSGKT. Positions 92-115 match the Beta-hairpin motif; it reads YYDYYQPEAYVPTTDTFIEKDASV. The region spanning 432–586 is the Helicase C-terminal domain; sequence QVDDLLSEIR…ALHNKKNGIT (155 aa). Residues 634–669 form the UVR domain; the sequence is ELEIQRLETEMYDLAQNLEFEKAAEARDKIHTLRQQ.

It belongs to the UvrB family. In terms of assembly, forms a heterotetramer with UvrA during the search for lesions. Interacts with UvrC in an incision complex.

It is found in the cytoplasm. Its function is as follows. The UvrABC repair system catalyzes the recognition and processing of DNA lesions. A damage recognition complex composed of 2 UvrA and 2 UvrB subunits scans DNA for abnormalities. Upon binding of the UvrA(2)B(2) complex to a putative damaged site, the DNA wraps around one UvrB monomer. DNA wrap is dependent on ATP binding by UvrB and probably causes local melting of the DNA helix, facilitating insertion of UvrB beta-hairpin between the DNA strands. Then UvrB probes one DNA strand for the presence of a lesion. If a lesion is found the UvrA subunits dissociate and the UvrB-DNA preincision complex is formed. This complex is subsequently bound by UvrC and the second UvrB is released. If no lesion is found, the DNA wraps around the other UvrB subunit that will check the other stand for damage. In Photobacterium profundum (strain SS9), this protein is UvrABC system protein B.